The primary structure comprises 356 residues: Heat-inducible transcription repressor HrcA (356 aa).

Belongs to the HrcA family.

Functionally, negative regulator of class I heat shock genes (grpE-dnaK-dnaJ and groELS operons). Prevents heat-shock induction of these operons. This Bartonella tribocorum (strain CIP 105476 / IBS 506) protein is Heat-inducible transcription repressor HrcA.